The chain runs to 388 residues: Sphingosine N-acyltransferase-like protein FUM17 (388 aa).

2 consecutive transmembrane segments (helical) span residues 60–80 and 113–133; these read SWALPLLLTIVLPVIYAIHPV and LWDLAFVAFYANALFLARKFI. An N-linked (GlcNAc...) asparagine glycan is attached at asparagine 146. Residues 151–368 form the TLC domain; the sequence is GKQQRFMEQM…LLRNAYRLLF (218 aa). A run of 4 helical transmembrane segments spans residues 166–186, 204–224, 241–261, and 339–359; these read FAVMGPFGLYVMKTTPGLWIF, IKFYYLLQAAYWVQQSVVLVL, IITITLIALSYRFHFTHIGIS, and FITFGLLATLQTLNIIWLYCL.

This sequence belongs to the sphingosine N-acyltransferase family.

It localises to the endoplasmic reticulum membrane. Its pathway is mycotoxin biosynthesis. In terms of biological role, sphingosine N-acyltransferase-like protein; part of the gene cluster that mediates the biosynthesis of fumonisins B1 (FB1), B2 (FB2), B3 (FB3), and B4 (FB4), which are carcinogenic mycotoxins. May contribute to the biosynthesis of ceramide via interaction with Cer3. Does not confer resistance to FB1. The biosynthesis starts with the FUM1-catalyzed carbon chain assembly from one molecule of acetyl-CoA, eight molecules of malonyl-CoA, and two molecules of methionine (in S-adenosyl form). The C18 polyketide chain is released from the enzyme by a nucleophilic attack of a carbanion, which is derived from R-carbon of alanine by decarboxylation, on the carbonyl carbon of polyketide acyl chain. This step is catalyzed by the pyridoxal 5'-phosphate-dependent aminoacyl transferase FUM8. The resultant 3-keto intermediate is then stereospecifically reduced to a 3-hydroxyl product by reductase FUM13. Subsequent oxidations at C-10 by the cytochrome P450 monooxygenase FUM2, C-14 and C-15 by FUM6, FUM12 or FUM15, tricarballylic esterification of the hydroxyl groups on C-14 and C-15 by acyltransferase FUM14, and C-5 hydroxylation by 2-keto-glutarate-dependent dioxygenase FUM3 furnish the biosynthesis of fumonisins. The tricarballylic moieties are most likely derived from the citric acid cycle, and their addition to the carbon backbone may involve FUM7, FUM10, FUM11 and FUM14. The protein is Sphingosine N-acyltransferase-like protein FUM17 of Gibberella moniliformis (strain M3125 / FGSC 7600) (Maize ear and stalk rot fungus).